The following is a 139-amino-acid chain: ATP synthase epsilon chain (139 aa).

It belongs to the ATPase epsilon chain family. As to quaternary structure, F-type ATPases have 2 components, CF(1) - the catalytic core - and CF(0) - the membrane proton channel. CF(1) has five subunits: alpha(3), beta(3), gamma(1), delta(1), epsilon(1). CF(0) has three main subunits: a, b and c.

It is found in the cell inner membrane. In terms of biological role, produces ATP from ADP in the presence of a proton gradient across the membrane. The chain is ATP synthase epsilon chain from Marinomonas sp. (strain MWYL1).